The following is a 357-amino-acid chain: Glucose-6-phosphatase catalytic subunit 1 (357 aa).

Over 1-28 the chain is Lumenal; the sequence is MEKGMDVLHDFGIQSTHYLQVNYQDSQD. A helical transmembrane segment spans residues 29-49; that stretch reads WFILVSVIADLRNAFYVLFPI. At 50–60 the chain is on the cytoplasmic side; sequence WFHLREAVGIK. A helical membrane pass occupies residues 61–81; the sequence is LLWVAVIGDWLNLVFKWILFG. The Lumenal segment spans residues 82–117; that stretch reads QRPYWWVMDTDYYSNTSVPLIKQFPVTCETGPGSPS. Substrate is bound at residue Arg83. An N-linked (GlcNAc...) asparagine glycan is attached at Asn96. The helical transmembrane segment at 118-138 threads the bilayer; the sequence is GHAMGTAGVYYVMVTSTLSIF. His119 functions as the Proton donor in the catalytic mechanism. Residues 139–147 lie on the Cytoplasmic side of the membrane; that stretch reads RGRKRPTYR. Residues 148 to 168 traverse the membrane as a helical segment; that stretch reads FRCLNILLWLGFWAVQLNVCL. Over 169–170 the chain is Lumenal; sequence SR. Residue Arg170 coordinates substrate. The helical transmembrane segment at 171 to 191 threads the bilayer; that stretch reads IYLAAHFPHQVVAGVLSGIAV. Catalysis depends on His176, which acts as the Nucleophile. Topologically, residues 192 to 209 are cytoplasmic; sequence AETFRHIQSIYNASLKKY. Residues 210–230 traverse the membrane as a helical segment; the sequence is FLITFFLFSFAIGFYLLLKGL. At 231–254 the chain is on the lumenal side; it reads GVDLLWTLEKARRWCERPEWVHID. The helical transmembrane segment at 255 to 275 threads the bilayer; the sequence is TTPFASLLKNVGTLFGLGVTL. Over 276-291 the chain is Cytoplasmic; the sequence is NSSMYRESCKGKLSKW. The helical transmembrane segment at 292–312 threads the bilayer; sequence FPFRLSCIVVSLILLHLFDSL. Over 313–320 the chain is Lumenal; that stretch reads KPPSQTEL. A helical membrane pass occupies residues 321–341; it reads IFYTLSFCKSAAVPLASVSLI. At 342–357 the chain is on the cytoplasmic side; that stretch reads PYCLARVFDQPDKKSL. Residues 354–357 carry the Prevents secretion from ER motif; that stretch reads KKSL.

The protein belongs to the glucose-6-phosphatase family.

It localises to the endoplasmic reticulum membrane. The catalysed reaction is D-glucose 6-phosphate + H2O = D-glucose + phosphate. Its pathway is carbohydrate biosynthesis; gluconeogenesis. Functionally, hydrolyzes glucose-6-phosphate to glucose in the endoplasmic reticulum. Forms with the glucose-6-phosphate transporter (SLC37A4/G6PT) the complex responsible for glucose production in the terminal step of glycogenolysis and gluconeogenesis. Hence, it is the key enzyme in homeostatic regulation of blood glucose levels. The protein is Glucose-6-phosphatase catalytic subunit 1 (G6PC1) of Canis lupus familiaris (Dog).